A 305-amino-acid chain; its full sequence is T-cell immunoglobulin and mucin domain-containing protein 2 (305 aa).

Residues 1-21 form the signal peptide; the sequence is MNQIQVFISGLILLLPGAVES. The Ig-like V-type domain maps to 22-125; sequence HTAVQGLAGH…AFHFVDYMLE (104 aa). The Extracellular portion of the chain corresponds to 22–231; sequence HTAVQGLAGH…QKPQKNLNKG (210 aa). Disulfide bonds link cysteine 37/cysteine 109, cysteine 50/cysteine 61, and cysteine 56/cysteine 108. Residues asparagine 86 and asparagine 91 are each glycosylated (N-linked (GlcNAc...) asparagine). The interval 130–174 is disordered; it reads ISTSPPTRPTATGRPTTISTRSTHVPTSTRVSTSTSPTPAHTETY. A compositionally biased stretch (low complexity) spans 131–167; it reads STSPPTRPTATGRPTTISTRSTHVPTSTRVSTSTSPT. The helical transmembrane segment at 232–252 threads the bilayer; it reads FYVGISIAALLILMLLSTMVI. Topologically, residues 253–305 are cytoplasmic; it reads TRYVVMKRKSESLSFVAFPISKIGASPKKVVERTRCEDQVYIIEDTPYPEEES.

It belongs to the immunoglobulin superfamily. TIM family. Homodimer. Expressed on late differentiated Th2 cells. Expressed also on all splenic B-cells, with increased levels on germinal center B-cells, in the liver, especially in bile duct epithelial cells, and in renal tubule cells. Within retina, mainly expressed in Mueller cells.

It is found in the cell membrane. Its function is as follows. Cell surface glycoprotein that participates in iron homeostasis in the liver, the kidney, the retina and oligodendrocytes by acting as a receptor of H-ferritin. Mechanistically, mediates iron-containing ferritin uptake via an endocytic pathway, trafficking to endosomes and subsequently to lysosomes. Plays also an important role in the regulation of Th2 immunity. Receptor for SEMA4A involved in the regulation of T-cell function, enhancing T-cell activation. This Mus musculus (Mouse) protein is T-cell immunoglobulin and mucin domain-containing protein 2 (Timd2).